The sequence spans 276 residues: Omega-amidase NIT2-B (276 aa).

A CN hydrolase domain is found at 4-248; that stretch reads FRLSLVQFLV…ETVISADIDL (245 aa). Residue glutamate 43 is the Proton acceptor of the active site. Residue lysine 112 is the Proton donor of the active site. The active-site Nucleophile is the cysteine 153.

Belongs to the carbon-nitrogen hydrolase superfamily. NIT1/NIT2 family. In terms of assembly, homodimer.

The protein localises to the cytoplasm. The catalysed reaction is 2-oxoglutaramate + H2O = 2-oxoglutarate + NH4(+). It catalyses the reaction 2-oxosuccinamate + H2O = oxaloacetate + NH4(+). Its function is as follows. Has omega-amidase activity. The role of omega-amidase is to remove potentially toxic intermediates by converting 2-oxoglutaramate and 2-oxosuccinamate to biologically useful 2-oxoglutarate and oxaloacetate, respectively. This Xenopus laevis (African clawed frog) protein is Omega-amidase NIT2-B (nit2b).